A 339-amino-acid chain; its full sequence is MNQRNASMTVIGAGSYGTALAITLARNGHEVVLWGHDPEHIATLERDRCNAAFLPDVPFPDTLHLESDLATALAASRNILVVVPSHVFGEVLRQIKPLMRPDARLVWATKGLEAETGRLLQDVAREALGDQIPLAVISGPTFAKELAAGLPTAISLASTDQTFADDLQQLLHCGKSFRVYSNPDFIGVQLGGAVKNVIAIGAGMSDGIGFGANARTALITRGLAEMSRLGAALGAEPATFMGMAGLGDLVLTCTDNQSRNRRFGMMLGQGMDVQSAQEKIGQVVEGYRNTKEVRELAHRFGVEMPITEEIYQVLYCGKNAREAALTLLGRARKDERSSH.

Positions 15, 16, 36, and 110 each coordinate NADPH. The sn-glycerol 3-phosphate site is built by lysine 110, glycine 139, and threonine 141. Alanine 143 provides a ligand contact to NADPH. Positions 195, 248, 258, 259, and 260 each coordinate sn-glycerol 3-phosphate. Lysine 195 acts as the Proton acceptor in catalysis. Arginine 259 is a binding site for NADPH. NADPH contacts are provided by valine 283 and glutamate 285.

The protein belongs to the NAD-dependent glycerol-3-phosphate dehydrogenase family.

The protein resides in the cytoplasm. The catalysed reaction is sn-glycerol 3-phosphate + NAD(+) = dihydroxyacetone phosphate + NADH + H(+). The enzyme catalyses sn-glycerol 3-phosphate + NADP(+) = dihydroxyacetone phosphate + NADPH + H(+). It functions in the pathway membrane lipid metabolism; glycerophospholipid metabolism. Its function is as follows. Catalyzes the reduction of the glycolytic intermediate dihydroxyacetone phosphate (DHAP) to sn-glycerol 3-phosphate (G3P), the key precursor for phospholipid synthesis. The chain is Glycerol-3-phosphate dehydrogenase [NAD(P)+] from Shigella boydii serotype 18 (strain CDC 3083-94 / BS512).